The following is a 527-amino-acid chain: Bifunctional purine biosynthesis protein PurH (527 aa).

One can recognise an MGS-like domain in the interval 1–149 (MASDFLPVRR…KNFARVAVAT (149 aa)).

Belongs to the PurH family.

The catalysed reaction is (6R)-10-formyltetrahydrofolate + 5-amino-1-(5-phospho-beta-D-ribosyl)imidazole-4-carboxamide = 5-formamido-1-(5-phospho-D-ribosyl)imidazole-4-carboxamide + (6S)-5,6,7,8-tetrahydrofolate. It catalyses the reaction IMP + H2O = 5-formamido-1-(5-phospho-D-ribosyl)imidazole-4-carboxamide. Its pathway is purine metabolism; IMP biosynthesis via de novo pathway; 5-formamido-1-(5-phospho-D-ribosyl)imidazole-4-carboxamide from 5-amino-1-(5-phospho-D-ribosyl)imidazole-4-carboxamide (10-formyl THF route): step 1/1. The protein operates within purine metabolism; IMP biosynthesis via de novo pathway; IMP from 5-formamido-1-(5-phospho-D-ribosyl)imidazole-4-carboxamide: step 1/1. This is Bifunctional purine biosynthesis protein PurH from Xanthomonas oryzae pv. oryzae (strain KACC10331 / KXO85).